A 161-amino-acid polypeptide reads, in one-letter code: Capsid protein (161 aa).

The protein belongs to the virgaviridae capsid protein family.

It localises to the virion. Functionally, capsid protein self-assembles to form rod-shaped virions about 18 nm in diameter with a central canal enclosing the viral genomic RNA. The sequence is that of Capsid protein (CP) from Tobamovirus Ob.